Reading from the N-terminus, the 169-residue chain is Nucleoside diphosphate kinase 3 (169 aa).

ADP-binding residues include lysine 29, arginine 105, threonine 111, arginine 122, valine 129, and asparagine 132. Histidine 135 serves as the catalytic Pros-phosphohistidine intermediate.

It belongs to the NDK family. Homohexamer. Interacts (via its N-terminal region) with KAT5; this interaction enables recruitment of NME3 at DNA damage sites where it plays a role in the repair of DNA. Found in association with several ciliary nephronophthisis proteins, including NEK8, CEP164, ANKS6. It depends on Mg(2+) as a cofactor.

The protein localises to the mitochondrion outer membrane. It is found in the cytoplasm. It localises to the cytoskeleton. The protein resides in the cilium basal body. It catalyses the reaction a 2'-deoxyribonucleoside 5'-diphosphate + ATP = a 2'-deoxyribonucleoside 5'-triphosphate + ADP. The enzyme catalyses a ribonucleoside 5'-diphosphate + ATP = a ribonucleoside 5'-triphosphate + ADP. Functionally, catalyzes the phosphorylation of ribonucleosides and deoxyribonucleoside diphosphates, other than ATP, into the corresponding triphosphates with ATP as the major phosphate donor. The ATP gamma phosphate is transferred to the nucleoside diphosphate beta phosphate via a ping-pong mechanism, using a phosphorylated active-site intermediate. Through the catalyzed exchange of gamma-phosphate between di- and triphosphonucleosides participates in regulation of intracellular nucleotide homeostasis. Inhibits granulocyte differentiation. May be required for ciliary function during renal development. Independently of its kinase activity, facilitates mitochondrial tethering prior to membrane fusion through its direct membrane-binding and hexamerization. Implicated in repair of both single- and double-stranded breaks in DNA through its association with the ribonucleotide reductase complex (RNR complex) via its interaction with the histone acetyltransferase KAT5, this interaction enables recruitment of NME3 at DNA damage sites where it plays a role in the repair of DNA, independently of its kinase activity. This chain is Nucleoside diphosphate kinase 3, found in Homo sapiens (Human).